The primary structure comprises 496 residues: Maintenance of mitochondrial morphology protein 1 (496 aa).

At 1–22 the chain is on the lumenal side; sequence MSSQLNDPTPIPAQSSLSFTQG. The helical transmembrane segment at 23 to 43 threads the bilayer; that stretch reads FLLGQLSVVLLIAAFIKFFIF. The Cytoplasmic portion of the chain corresponds to 44-496; the sequence is GEAPPPPSRG…SLPGGGVTTT (453 aa). Disordered stretches follow at residues 50–96, 276–331, 395–433, and 449–496; these read PSRG…VPSS, PLDT…KSNV, GRTG…SREP, and DLAS…VTTT. Positions 54–64 are enriched in basic residues; the sequence is LSHRSATHRRS. A compositionally biased stretch (polar residues) spans 65–74; the sequence is NSIYSSTQHD. Residues 75–84 are compositionally biased toward basic and acidic residues; the sequence is GNTRTLREKP. Residues 85–96 show a composition bias toward polar residues; the sequence is SNSNVLRPVPSS. An SMP-LTD domain is found at 131-388; it reads QPESLDWFNV…EPRVQVVGLP (258 aa). Positions 276 to 287 are enriched in pro residues; sequence PLDTPSHSPSPP. Over residues 407 to 418 the composition is skewed to polar residues; sequence TGSNAPRSSTAA. Composition is skewed to basic and acidic residues over residues 424–433 and 462–474; these read AHHEDSSREP and GDLR…REES.

It belongs to the MMM1 family. Homodimer. Component of the ER-mitochondria encounter structure (ERMES) or MDM complex, composed of mmm1, mdm10, mdm12 and mdm34. A mmm1 homodimer associates with one molecule of mdm12 on each side in a pairwise head-to-tail manner, and the SMP-LTD domains of mmm1 and mdm12 generate a continuous hydrophobic tunnel for phospholipid trafficking.

The protein resides in the endoplasmic reticulum membrane. In terms of biological role, component of the ERMES/MDM complex, which serves as a molecular tether to connect the endoplasmic reticulum (ER) and mitochondria. Components of this complex are involved in the control of mitochondrial shape and protein biogenesis, and function in nonvesicular lipid trafficking between the ER and mitochondria. The mdm12-mmm1 subcomplex functions in the major beta-barrel assembly pathway that is responsible for biogenesis of all outer membrane beta-barrel proteins, and acts in a late step after the SAM complex. The mdm10-mdm12-mmm1 subcomplex further acts in the TOM40-specific pathway after the action of the mdm12-mmm1 complex. Essential for establishing and maintaining the structure of mitochondria and maintenance of mtDNA nucleoids. This chain is Maintenance of mitochondrial morphology protein 1, found in Neosartorya fischeri (strain ATCC 1020 / DSM 3700 / CBS 544.65 / FGSC A1164 / JCM 1740 / NRRL 181 / WB 181) (Aspergillus fischerianus).